Reading from the N-terminus, the 105-residue chain is Large ribosomal subunit protein eL36 (105 aa).

K62 is subject to N6-acetyllysine.

Belongs to the eukaryotic ribosomal protein eL36 family. Component of the large ribosomal subunit.

Its subcellular location is the cytoplasm. The protein localises to the cytosol. In terms of biological role, component of the large ribosomal subunit. The ribosome is a large ribonucleoprotein complex responsible for the synthesis of proteins in the cell. This is Large ribosomal subunit protein eL36 (Rpl36) from Rattus norvegicus (Rat).